Consider the following 191-residue polypeptide: Thymidylate kinase (191 aa).

Gly-7–Ser-14 is a binding site for ATP.

Belongs to the thymidylate kinase family.

The enzyme catalyses dTMP + ATP = dTDP + ADP. Functionally, phosphorylation of dTMP to form dTDP in both de novo and salvage pathways of dTTP synthesis. This chain is Thymidylate kinase, found in Helicobacter pylori (strain P12).